A 485-amino-acid chain; its full sequence is 3-isopropylmalate dehydratase large subunit (485 aa).

Disordered regions lie at residues 1–20 and 73–92; these read MSDA…QSTG and PERT…RSLP. Residues Cys364, Cys424, and Cys427 each contribute to the [4Fe-4S] cluster site.

The protein belongs to the aconitase/IPM isomerase family. LeuC type 1 subfamily. Heterodimer of LeuC and LeuD. Requires [4Fe-4S] cluster as cofactor.

The enzyme catalyses (2R,3S)-3-isopropylmalate = (2S)-2-isopropylmalate. The protein operates within amino-acid biosynthesis; L-leucine biosynthesis; L-leucine from 3-methyl-2-oxobutanoate: step 2/4. In terms of biological role, catalyzes the isomerization between 2-isopropylmalate and 3-isopropylmalate, via the formation of 2-isopropylmaleate. This chain is 3-isopropylmalate dehydratase large subunit, found in Rhodopirellula baltica (strain DSM 10527 / NCIMB 13988 / SH1).